Reading from the N-terminus, the 188-residue chain is ATP synthase subunit b (188 aa).

A helical transmembrane segment spans residues 30–50 (IVWSLIPFLIILIVFWKLVLP).

Belongs to the ATPase B chain family. As to quaternary structure, F-type ATPases have 2 components, F(1) - the catalytic core - and F(0) - the membrane proton channel. F(1) has five subunits: alpha(3), beta(3), gamma(1), delta(1), epsilon(1). F(0) has three main subunits: a(1), b(2) and c(10-14). The alpha and beta chains form an alternating ring which encloses part of the gamma chain. F(1) is attached to F(0) by a central stalk formed by the gamma and epsilon chains, while a peripheral stalk is formed by the delta and b chains.

The protein resides in the cell membrane. F(1)F(0) ATP synthase produces ATP from ADP in the presence of a proton or sodium gradient. F-type ATPases consist of two structural domains, F(1) containing the extramembraneous catalytic core and F(0) containing the membrane proton channel, linked together by a central stalk and a peripheral stalk. During catalysis, ATP synthesis in the catalytic domain of F(1) is coupled via a rotary mechanism of the central stalk subunits to proton translocation. Functionally, component of the F(0) channel, it forms part of the peripheral stalk, linking F(1) to F(0). The sequence is that of ATP synthase subunit b from Corynebacterium glutamicum (strain R).